The sequence spans 74 residues: Putative protein YozX (74 aa).

The protein is Putative protein YozX (yozX) of Bacillus subtilis (strain 168).